Here is a 447-residue protein sequence, read N- to C-terminus: N-succinylarginine dihydrolase (447 aa).

Substrate-binding positions include 19–28, Asn-110, and 137–138; these read AGLSFGNEAS and HR. Glu-174 is an active-site residue. Arg-212 serves as a coordination point for substrate. The active site involves His-248. Residues Asp-250 and Asn-359 each coordinate substrate. The Nucleophile role is filled by Cys-365.

Belongs to the succinylarginine dihydrolase family. In terms of assembly, homodimer.

It catalyses the reaction N(2)-succinyl-L-arginine + 2 H2O + 2 H(+) = N(2)-succinyl-L-ornithine + 2 NH4(+) + CO2. Its pathway is amino-acid degradation; L-arginine degradation via AST pathway; L-glutamate and succinate from L-arginine: step 2/5. Its function is as follows. Catalyzes the hydrolysis of N(2)-succinylarginine into N(2)-succinylornithine, ammonia and CO(2). This Escherichia coli O9:H4 (strain HS) protein is N-succinylarginine dihydrolase.